Consider the following 381-residue polypeptide: Chorismate synthase (381 aa).

NADP(+) contacts are provided by Arg41 and Arg47. Residues 127-129, 247-248, Gly291, 306-310, and Arg332 each bind FMN; these read RAS, QA, and KPIPT.

The protein belongs to the chorismate synthase family. In terms of assembly, homotetramer. FMNH2 is required as a cofactor.

The enzyme catalyses 5-O-(1-carboxyvinyl)-3-phosphoshikimate = chorismate + phosphate. It functions in the pathway metabolic intermediate biosynthesis; chorismate biosynthesis; chorismate from D-erythrose 4-phosphate and phosphoenolpyruvate: step 7/7. In terms of biological role, catalyzes the anti-1,4-elimination of the C-3 phosphate and the C-6 proR hydrogen from 5-enolpyruvylshikimate-3-phosphate (EPSP) to yield chorismate, which is the branch point compound that serves as the starting substrate for the three terminal pathways of aromatic amino acid biosynthesis. This reaction introduces a second double bond into the aromatic ring system. This chain is Chorismate synthase, found in Anaeromyxobacter dehalogenans (strain 2CP-1 / ATCC BAA-258).